The primary structure comprises 354 residues: mRNA cap guanine-N(7) methyltransferase 2 (354 aa).

Residues 8 to 286 form the mRNA cap 0 methyltransferase domain; it reads KPEQSHHRLF…LYATFIFQKP (279 aa). Residues K21, D61, and 88 to 89 contribute to the S-adenosyl-L-methionine site; that span reads DP.

Belongs to the class I-like SAM-binding methyltransferase superfamily. mRNA cap 0 methyltransferase family.

The protein resides in the nucleus. The enzyme catalyses a 5'-end (5'-triphosphoguanosine)-ribonucleoside in mRNA + S-adenosyl-L-methionine = a 5'-end (N(7)-methyl 5'-triphosphoguanosine)-ribonucleoside in mRNA + S-adenosyl-L-homocysteine. In terms of biological role, mRNA capping methyltransferase that methylates the N7 position of the added guanosine to the 5'-cap structure of mRNAs. Binds RNA containing 5'-terminal GpppC. This chain is mRNA cap guanine-N(7) methyltransferase 2, found in Arabidopsis thaliana (Mouse-ear cress).